The primary structure comprises 469 residues: Phenolic glucoside malonyltransferase 1 (469 aa).

The residue at position 1 (M1) is an N-acetylmethionine. The active-site Proton acceptor is the H169. The HXXXD motif motif lies at 169 to 173 (HAVLD). 291 to 292 (ST) contacts malonyl-CoA. D413 serves as the catalytic Proton acceptor. Residues 413-417 (DFGWG) carry the DFGWG motif motif.

Belongs to the plant acyltransferase family. Phenolic glucoside malonyltransferase subfamily.

It carries out the reaction a flavonol 3-O-beta-D-glucoside + malonyl-CoA = a flavonol 3-O-(6-O-malonyl-beta-D-glucoside) + CoA. It catalyses the reaction a flavonol 7-O-beta-D-glucoside + malonyl-CoA = a flavonol 7-O-(6-O-malonyl-beta-D-glucoside) + CoA. Malonyltransferase acting on xenobiotic glucosides. Has activity toward 2-Naphthol glucoside (2NAG), 1-Naphthol glucoside (1NAG), kaempferol 7-O-glucoside, kaempferol 3-O-glucoside, hydroxycoumarin glucosides, phenol-glucosides and isoflavone glucoside (daidzin), but not toward 4-coumaroyl glucoside, kaempferol 3,7-O-diglucoside, salicylic acid glucoside and phlorizin. In vivo, seems to be involved in the malonylation of 2-Naphthol glucoside while PMAT2 would be involved in the malonylation of 4-methylumbelliferone glucoside or 4-nitrophenyl glucoside. In Arabidopsis thaliana (Mouse-ear cress), this protein is Phenolic glucoside malonyltransferase 1 (PMAT1).